We begin with the raw amino-acid sequence, 439 residues long: Enolase 1-1 (439 aa).

Threonine 85 is subject to Phosphothreonine. Substrate is bound by residues histidine 159 and glutamate 168. Glutamate 211 functions as the Proton donor in the catalytic mechanism. Aspartate 246 serves as a coordination point for Mg(2+). Phosphoserine is present on residues serine 249 and serine 250. Position 253 is a phosphotyrosine (tyrosine 253). Substrate is bound by residues glutamate 295 and aspartate 320. Glutamate 295 and aspartate 320 together coordinate Mg(2+). Catalysis depends on lysine 345, which acts as the Proton acceptor. At serine 351 the chain carries Phosphoserine. Threonine 353 carries the phosphothreonine modification. The residue at position 355 (serine 355) is a Phosphoserine. Substrate is bound by residues 372–375 (SHRS) and lysine 396. Position 421 is a phosphoserine (serine 421).

Belongs to the enolase family. Homodimer. Requires Mg(2+) as cofactor.

The protein localises to the cytoplasm. The catalysed reaction is (2R)-2-phosphoglycerate = phosphoenolpyruvate + H2O. The protein operates within carbohydrate degradation; glycolysis; pyruvate from D-glyceraldehyde 3-phosphate: step 4/5. This chain is Enolase 1-1 (eno101), found in Schizosaccharomyces pombe (strain 972 / ATCC 24843) (Fission yeast).